The primary structure comprises 174 residues: Gamma-crystallin S (174 aa).

2 consecutive Beta/gamma crystallin 'Greek key' domains span residues 2–40 and 41–83; these read GRII…RVES and GAWV…KMIH. The connecting peptide stretch occupies residues 84 to 89; the sequence is FVSGSE. Beta/gamma crystallin 'Greek key' domains lie at 90-130 and 131-173; these read YKIQ…KVLD and GIWI…KRLM.

It belongs to the beta/gamma-crystallin family.

In terms of biological role, crystallins are the dominant structural components of the vertebrate eye lens. The polypeptide is Gamma-crystallin S (crygs) (Cyprinus carpio (Common carp)).